Reading from the N-terminus, the 289-residue chain is Digeranylgeranylglyceryl phosphate synthase (289 aa).

Helical transmembrane passes span Leu18 to Gly38, Ala47 to Gly67, Phe99 to Ile119, Cys120 to Gly140, Ile163 to Ile183, Leu218 to Val238, Tyr243 to Val263, and Lys269 to Val289.

The protein belongs to the UbiA prenyltransferase family. DGGGP synthase subfamily. Mg(2+) serves as cofactor.

The protein localises to the cell membrane. The catalysed reaction is sn-3-O-(geranylgeranyl)glycerol 1-phosphate + (2E,6E,10E)-geranylgeranyl diphosphate = 2,3-bis-O-(geranylgeranyl)-sn-glycerol 1-phosphate + diphosphate. It participates in membrane lipid metabolism; glycerophospholipid metabolism. In terms of biological role, prenyltransferase that catalyzes the transfer of the geranylgeranyl moiety of geranylgeranyl diphosphate (GGPP) to the C2 hydroxyl of (S)-3-O-geranylgeranylglyceryl phosphate (GGGP). This reaction is the second ether-bond-formation step in the biosynthesis of archaeal membrane lipids. The chain is Digeranylgeranylglyceryl phosphate synthase from Methanosarcina mazei (strain ATCC BAA-159 / DSM 3647 / Goe1 / Go1 / JCM 11833 / OCM 88) (Methanosarcina frisia).